A 385-amino-acid chain; its full sequence is MNHPYSWIEDSLKTLHRANWYRRVKTIQGRGGAVIELEGRSLINFASNDYLGLAADERMIAAAIAATQRYGTGSTGSRLLSGHRDLHRDLELAIASFKNSEDAIVFSSGYLANLGTITCLVGQKDLILGDQYNHSSLKNGAKLSGATVKEYRHNSLEDLENQLLAHRHHYRHCLLLTDTVFSMDGDICPLAGILALAEIYNCMVLVDEAHATGVMGENGTGCVEYCGCQGRELIQMGTLSKALGSLGGYVTGNAKIIDFIRNRAATWIYTTGLSPADTAAARMALEIIRLEPERRQRLHQNINFVKSKLNNLNILPSEAAILCLPVANPGQALELSQKLLEKGIFAPAIRPPTVPTSRLRFTAMATHSLAHLEVLVQSIGESFPT.

Residue Arg22 coordinates substrate. 109–110 (GY) is a pyridoxal 5'-phosphate binding site. His134 serves as a coordination point for substrate. Pyridoxal 5'-phosphate contacts are provided by residues Ser182, 207-210 (DEAH), and 238-241 (TLSK). At Lys241 the chain carries N6-(pyridoxal phosphate)lysine. Residue Thr353 coordinates substrate.

It belongs to the class-II pyridoxal-phosphate-dependent aminotransferase family. BioF subfamily. As to quaternary structure, homodimer. The cofactor is pyridoxal 5'-phosphate.

The catalysed reaction is 6-carboxyhexanoyl-[ACP] + L-alanine + H(+) = (8S)-8-amino-7-oxononanoate + holo-[ACP] + CO2. It participates in cofactor biosynthesis; biotin biosynthesis. Catalyzes the decarboxylative condensation of pimeloyl-[acyl-carrier protein] and L-alanine to produce 8-amino-7-oxononanoate (AON), [acyl-carrier protein], and carbon dioxide. The polypeptide is Putative 8-amino-7-oxononanoate synthase (bioF) (Microcystis aeruginosa (strain NIES-843 / IAM M-2473)).